A 458-amino-acid chain; its full sequence is COBRA-like protein 2 (458 aa).

The N-terminal stretch at methionine 1–alanine 29 is a signal peptide. N-linked (GlcNAc...) asparagine glycans are attached at residues asparagine 38, asparagine 163, asparagine 171, asparagine 211, asparagine 236, asparagine 318, asparagine 333, and asparagine 352. Residues valine 430–valine 450 traverse the membrane as a helical segment.

Belongs to the COBRA family.

Its subcellular location is the membrane. The polypeptide is COBRA-like protein 2 (BC1L2) (Oryza sativa subsp. japonica (Rice)).